The primary structure comprises 224 residues: LexA repressor (224 aa).

The segment at residues 41–61 (MREIGDAVGLSSLSSVTHQLN) is a DNA-binding region (H-T-H motif). Catalysis depends on for autocatalytic cleavage activity residues Ser-148 and Lys-185.

It belongs to the peptidase S24 family. Homodimer.

It carries out the reaction Hydrolysis of Ala-|-Gly bond in repressor LexA.. Represses a number of genes involved in the response to DNA damage (SOS response), including recA and lexA. In the presence of single-stranded DNA, RecA interacts with LexA causing an autocatalytic cleavage which disrupts the DNA-binding part of LexA, leading to derepression of the SOS regulon and eventually DNA repair. This is LexA repressor from Leifsonia xyli subsp. xyli (strain CTCB07).